The sequence spans 58 residues: ComX pheromone (58 aa).

A propeptide spanning residues 1–52 (MKQDMIDYLMKNPQVLTKLENGEASLIGIPDKLIPSIVDIFNKKMTLSKKCK) is cleaved from the precursor. Trp-56 is lipidated: 3'-geranyl-2',N2-cyclotryptophan; in strain RO-E-2 /NRRL B-23055.

As to quaternary structure, interacts directly with the sensor histidine kinase ComP and stimulates its activity. Post-translationally, trp-56 is modified by geranylation, which is essential for activity. Modified by the tryptophan prenyltransferase ComQ before export to the extracellular environment. The type of isoprenyl derivative differs among the different pherotypes and depends on ComX primary sequence.

Its subcellular location is the secreted. In terms of biological role, part of a major quorum-sensing system that regulates the development of genetic competence. Acts through the activation of the two-component regulatory system ComP/ComA composed of a sensor histidine kinase, ComP, and a response regulator, ComA. This Bacillus spizizenii (Bacillus subtilis subsp. spizizenii) protein is ComX pheromone.